The following is a 621-amino-acid chain: MVPVENTEGPNLLNQKGTAVETEGSYRASGSRHPPWARGCGMFTFLSSVTAAVSGLLVGYELGIISGALLQIKTLLTLSCHEQEMVVSSLLIGALLASLTGGVLIDRYGRRTAIILSSCLLGLGSLVLILSLSYTVLIVGRIAIGVSISLSSIATCVYIAEIAPQHRRGLLVSLNELMIVIGILSAYISNYAFANVFHGWKYMFGLVIPLGILQAIAMYFLPPSPRFLVMKGQEGAASKVLGRLRALSDATEELTVIKSSLKDEYQYSFWDLFRSKDNMRTRIMIGLTLVFFVQITGQPNILFYASTVLKSVGFQSNEAASLASTGVGVVKVISTIPATLLVDHVGSKTFLCIGSSVMAASLVTMGIVNLNIHMNFTNICRSHNSINQSLDESVIYGPGNLSASNNTLRDHFKGIASHSRSSLMPLRNDVDKRGETTSASLLNAVLSHTEYQIVTDPGDVPAFLKWLSLASLLVYVAAFSIGLGPMPWLVLSEIFPGGIRGRAMALTSSMNWGINLLISLTFLTVTDLIGLPWVCFIYTIMSLASLLFVVMFIPETKGCSLEQISMELAKVNYVKNNICFMSHHQEELVPRQPQKRKPQEQLLECNKLCGRGQSRQLSPEN.

Residues 1–48 (MVPVENTEGPNLLNQKGTAVETEGSYRASGSRHPPWARGCGMFTFLSS) are Cytoplasmic-facing. The chain crosses the membrane as a helical span at residues 49–69 (VTAAVSGLLVGYELGIISGAL). Over 70-84 (LQIKTLLTLSCHEQE) the chain is Extracellular. The helical transmembrane segment at 85 to 105 (MVVSSLLIGALLASLTGGVLI) threads the bilayer. Residues 106 to 119 (DRYGRRTAIILSSC) are Cytoplasmic-facing. Residues 120-140 (LLGLGSLVLILSLSYTVLIVG) traverse the membrane as a helical segment. Arg141 is a topological domain (extracellular). The helical transmembrane segment at 142–162 (IAIGVSISLSSIATCVYIAEI) threads the bilayer. At 163–176 (APQHRRGLLVSLNE) the chain is on the cytoplasmic side. Residues 177–197 (LMIVIGILSAYISNYAFANVF) traverse the membrane as a helical segment. The Extracellular segment spans residues 198 to 201 (HGWK). A helical membrane pass occupies residues 202-222 (YMFGLVIPLGILQAIAMYFLP). At 223–282 (PSPRFLVMKGQEGAASKVLGRLRALSDATEELTVIKSSLKDEYQYSFWDLFRSKDNMRTR) the chain is on the cytoplasmic side. The helical transmembrane segment at 283–303 (IMIGLTLVFFVQITGQPNILF) threads the bilayer. Topologically, residues 304 to 321 (YASTVLKSVGFQSNEAAS) are extracellular. Residues 322–342 (LASTGVGVVKVISTIPATLLV) form a helical membrane-spanning segment. Topologically, residues 343–349 (DHVGSKT) are cytoplasmic. Residues 350–370 (FLCIGSSVMAASLVTMGIVNL) traverse the membrane as a helical segment. Residues 371 to 470 (NIHMNFTNIC…PAFLKWLSLA (100 aa)) lie on the Extracellular side of the membrane. N-linked (GlcNAc...) asparagine glycosylation is found at Asn375, Asn387, Asn400, and Asn405. The chain crosses the membrane as a helical span at residues 471–491 (SLLVYVAAFSIGLGPMPWLVL). At 492–502 (SEIFPGGIRGR) the chain is on the cytoplasmic side. Residues 503 to 523 (AMALTSSMNWGINLLISLTFL) form a helical membrane-spanning segment. Topologically, residues 524–532 (TVTDLIGLP) are extracellular. A helical membrane pass occupies residues 533-553 (WVCFIYTIMSLASLLFVVMFI). Topologically, residues 554 to 621 (PETKGCSLEQ…GQSRQLSPEN (68 aa)) are cytoplasmic.

The protein belongs to the major facilitator superfamily. Sugar transporter (TC 2.A.1.1) family. Glucose transporter subfamily.

The protein resides in the cell membrane. Its subcellular location is the endomembrane system. It localises to the cytoplasm. It is found in the perinuclear region. The enzyme catalyses D-glucose(out) = D-glucose(in). Its function is as follows. Insulin-independent facilitative glucose transporter. This is Solute carrier family 2, facilitated glucose transporter member 12 from Macaca fascicularis (Crab-eating macaque).